Here is a 238-residue protein sequence, read N- to C-terminus: Synapse differentiation-inducing gene protein 1-like (238 aa).

Disordered regions lie at residues 1-24, 78-111, and 126-155; these read MESLSELQNPLLPRSPTHLHGPYP, KVKEPRPGSCETSFTEGREPPAGPTERSTEPGQA, and EEFQGQEGDPEEEESDATSTESESEDNFLT. Residues 1-162 lie on the Extracellular side of the membrane; it reads MESLSELQNP…FLTLPPRDHL (162 aa). Residues 133-151 are compositionally biased toward acidic residues; that stretch reads GDPEEEESDATSTESESED. The chain crosses the membrane as a helical span at residues 163–183; it reads GLTIFSMLCCFWPLGIAAFYF. At 184–205 the chain is on the cytoplasmic side; it reads SQGTSKAISKGDFRLANTTSRR. The chain crosses the membrane as a helical span at residues 206–226; sequence ALFLATLSIAVGAGLYVAVVV. Topologically, residues 227–238 are extracellular; sequence ALAAYMSQNGHS.

This sequence belongs to the CD225/Dispanin family.

The protein localises to the membrane. Its subcellular location is the golgi apparatus. It localises to the cis-Golgi network. The polypeptide is Synapse differentiation-inducing gene protein 1-like (SYNDIG1L) (Bos taurus (Bovine)).